The primary structure comprises 273 residues: WIMGHMVNAIAQIDEFVNLGANSIETDVSFDSSANPEYTYHGVPCDCGGTCTKWEHFNEFLKGLRKATTPGDSKYHEKLVLVVFDLKTGSLYDNQASDAGKKLAKSLLQNYWNNGNNGGRAYIVLSIPNLAHYKLITGFKEALTSEGHPELMDKVGYDFSGNDDIGDVANAYKKAGVTGHVWQSDGITNCLLRGLDRVRKAVANRDSSSGYINKVYYWTVDKRQSTRDALDAGVDGIMTNYPDVIADVLNESAYKAKFRIASYDDNPWETFKN.

H5 is a catalytic residue. Mg(2+)-binding residues include E25 and D27. The active-site Nucleophile is H41. Disulfide bonds link C45–C51 and C47–C190. A Mg(2+)-binding site is contributed by D85. An N-linked (GlcNAc...) asparagine glycan is attached at N250.

It belongs to the arthropod phospholipase D family. Class II subfamily. It depends on Mg(2+) as a cofactor. As to expression, expressed by the venom gland.

It is found in the secreted. It carries out the reaction an N-(acyl)-sphingosylphosphocholine = an N-(acyl)-sphingosyl-1,3-cyclic phosphate + choline. The catalysed reaction is an N-(acyl)-sphingosylphosphoethanolamine = an N-(acyl)-sphingosyl-1,3-cyclic phosphate + ethanolamine. The enzyme catalyses a 1-acyl-sn-glycero-3-phosphocholine = a 1-acyl-sn-glycero-2,3-cyclic phosphate + choline. It catalyses the reaction a 1-acyl-sn-glycero-3-phosphoethanolamine = a 1-acyl-sn-glycero-2,3-cyclic phosphate + ethanolamine. In terms of biological role, dermonecrotic toxins cleave the phosphodiester linkage between the phosphate and headgroup of certain phospholipids (sphingolipid and lysolipid substrates), forming an alcohol (often choline) and a cyclic phosphate. This toxin acts on sphingomyelin (SM). It may also act on ceramide phosphoethanolamine (CPE), lysophosphatidylcholine (LPC) and lysophosphatidylethanolamine (LPE), but not on lysophosphatidylserine (LPS), and lysophosphatidylglycerol (LPG). It acts by transphosphatidylation, releasing exclusively cyclic phosphate products as second products. Induces dermonecrosis, hemolysis, increased vascular permeability, edema, inflammatory response, and platelet aggregation. This is Dermonecrotic toxin LapSicTox-alphaIB1ai from Loxosceles apachea (Apache recluse spider).